We begin with the raw amino-acid sequence, 115 residues long: uncharacterized protein (115 aa).

The region spanning 63–108 (GSPCGFEFREAITCQKTNSDGEIEQGACGKELMSFMECVTRTQCFG) is the CHCH domain. 2 consecutive short sequence motifs (cx9C motif) follow at residues 66–76 (CGFEFREAITC) and 90–100 (CGKELMSFMEC). 2 cysteine pairs are disulfide-bonded: cysteine 66-cysteine 100 and cysteine 76-cysteine 90.

This is an uncharacterized protein from Caenorhabditis elegans.